The primary structure comprises 391 residues: 5-amino-6-(D-ribitylamino)uracil--L-tyrosine 4-hydroxyphenyl transferase (391 aa).

Positions 55–302 (VTYVINRNIN…GAVARIYLGN (248 aa)) constitute a Radical SAM core domain. Residues cysteine 69, cysteine 73, and cysteine 76 each contribute to the [4Fe-4S] cluster site.

This sequence belongs to the radical SAM superfamily. CofH family. In terms of assembly, consists of two subunits, CofG and CofH. [4Fe-4S] cluster is required as a cofactor.

It carries out the reaction 5-amino-6-(D-ribitylamino)uracil + L-tyrosine + S-adenosyl-L-methionine = 5-amino-5-(4-hydroxybenzyl)-6-(D-ribitylimino)-5,6-dihydrouracil + 2-iminoacetate + 5'-deoxyadenosine + L-methionine + H(+). It functions in the pathway cofactor biosynthesis; coenzyme F0 biosynthesis. In terms of biological role, catalyzes the radical-mediated synthesis of 5-amino-5-(4-hydroxybenzyl)-6-(D-ribitylimino)-5,6-dihydrouracil from 5-amino-6-(D-ribitylamino)uracil and L-tyrosine. In Trichormus variabilis (strain ATCC 29413 / PCC 7937) (Anabaena variabilis), this protein is 5-amino-6-(D-ribitylamino)uracil--L-tyrosine 4-hydroxyphenyl transferase.